The primary structure comprises 691 residues: L-type lectin-domain containing receptor kinase S.6 (691 aa).

The first 25 residues, 1-25 (MNHHHYSLVIFHLILFLSLDFPTLS), serve as a signal peptide directing secretion. Over 26-311 (HRFSPPLQNL…VVGLKIPVWS (286 aa)) the chain is Extracellular. Positions 27–257 (RFSPPLQNLT…LHIVERWKFR (231 aa)) are legume-lectin like. 2 N-linked (GlcNAc...) asparagine glycosylation sites follow: Asn34 and Asn89. A helical transmembrane segment spans residues 312-332 (LLPGLAAIVILVAFIVFSLIC). The Cytoplasmic portion of the chain corresponds to 333-691 (GKKRISEEAD…PWMTPKSHFS (359 aa)). Residues 366 to 653 (FNENAIVGQG…IRGEAPLPVL (288 aa)) form the Protein kinase domain. ATP-binding positions include 372-380 (VGQGASATV) and Lys394. Asp500 (proton acceptor) is an active-site residue.

This sequence in the C-terminal section; belongs to the protein kinase superfamily. Ser/Thr protein kinase family. The protein in the N-terminal section; belongs to the leguminous lectin family.

The protein resides in the cell membrane. It carries out the reaction L-seryl-[protein] + ATP = O-phospho-L-seryl-[protein] + ADP + H(+). The enzyme catalyses L-threonyl-[protein] + ATP = O-phospho-L-threonyl-[protein] + ADP + H(+). Involved in resistance response to the pathogenic oomycetes Phytophthora infestans and Phytophthora capsici and to the pathogenic bacteria Pseudomonas syringae. This is L-type lectin-domain containing receptor kinase S.6 from Arabidopsis thaliana (Mouse-ear cress).